Reading from the N-terminus, the 338-residue chain is DNA-directed RNA polymerase subunit alpha (338 aa).

The alpha N-terminal domain (alpha-NTD) stretch occupies residues 1 to 234 (MIQKNWQELI…DQLNVFVNFE (234 aa)). The segment at 250 to 338 (FNPALLKKVD…ELAKRFEEHY (89 aa)) is alpha C-terminal domain (alpha-CTD).

It belongs to the RNA polymerase alpha chain family. In terms of assembly, homodimer. The RNAP catalytic core consists of 2 alpha, 1 beta, 1 beta' and 1 omega subunit. When a sigma factor is associated with the core the holoenzyme is formed, which can initiate transcription.

It catalyses the reaction RNA(n) + a ribonucleoside 5'-triphosphate = RNA(n+1) + diphosphate. Functionally, DNA-dependent RNA polymerase catalyzes the transcription of DNA into RNA using the four ribonucleoside triphosphates as substrates. This Beijerinckia indica subsp. indica (strain ATCC 9039 / DSM 1715 / NCIMB 8712) protein is DNA-directed RNA polymerase subunit alpha.